Here is a 72-residue protein sequence, read N- to C-terminus: MDSYPESLKKETEEIKERVRNGNIKEDKIKEIAETTVEFLKSEEKRHKYFSEVAAAMADNLSEFFKSYLKGE.

The sequence is that of SPbeta prophage-derived uncharacterized protein YorV (yorV) from Bacillus subtilis (strain 168).